The primary structure comprises 247 residues: Adenosylcobinamide-GDP ribazoletransferase (247 aa).

6 helical membrane-spanning segments follow: residues 31 to 51, 55 to 75, 109 to 129, 135 to 155, 183 to 203, and 227 to 247; these read ILFY…VTCI, LPAL…TGGL, IGVL…YVLI, LFLI…FLTT, VLLL…GFLI, and AIEI…FYLV.

The protein belongs to the CobS family. Requires Mg(2+) as cofactor.

The protein localises to the cell inner membrane. It catalyses the reaction alpha-ribazole + adenosylcob(III)inamide-GDP = adenosylcob(III)alamin + GMP + H(+). The catalysed reaction is alpha-ribazole 5'-phosphate + adenosylcob(III)inamide-GDP = adenosylcob(III)alamin 5'-phosphate + GMP + H(+). It participates in cofactor biosynthesis; adenosylcobalamin biosynthesis; adenosylcobalamin from cob(II)yrinate a,c-diamide: step 7/7. Functionally, joins adenosylcobinamide-GDP and alpha-ribazole to generate adenosylcobalamin (Ado-cobalamin). Also synthesizes adenosylcobalamin 5'-phosphate from adenosylcobinamide-GDP and alpha-ribazole 5'-phosphate. This is Adenosylcobinamide-GDP ribazoletransferase from Acinetobacter baumannii (strain ATCC 17978 / DSM 105126 / CIP 53.77 / LMG 1025 / NCDC KC755 / 5377).